Consider the following 337-residue polypeptide: MNQTELLESLKCASEGMVKAMTSTTMKLNFVFIATVIFLSFYFAGLAIQALLRNNIFSNSTRHILIVCLLNSIVHQAVTLETRIHQVYRSFVYSSEPCRLLFHFTECEVELYFYYLTNYFSTYAVFSLTFDRLVSHYKPKYYFSHQYYVSNSLLIIQLLLSLSTYYVGLYGVPLVGYAPICYYTPRLAVNFSKINDFRTATMVFCIIVTIFIYYLSVKSEKQIHRTSYSPGERYIACENVATSQSVCILIVLQFACIMLSSFGVNYIRARESLMSEENFNKIAPFFPGVTYASLCLPLVIYFKTKLTIRNRKLRIGVMTSMYGDVGDHMNRLKKSWE.

Helical transmembrane passes span 28 to 48, 110 to 130, 155 to 175, 197 to 217, 247 to 267, and 282 to 302; these read LNFV…GLAI, ELYF…SLTF, IIQL…VPLV, FRTA…YLSV, CILI…VNYI, and IAPF…VIYF.

The protein belongs to the nematode receptor-like protein sra family.

Its subcellular location is the membrane. The protein is Serpentine receptor class alpha-17 (sra-17) of Caenorhabditis elegans.